A 396-amino-acid chain; its full sequence is Alanine racemase (396 aa).

Residue K46 is the Proton acceptor; specific for D-alanine of the active site. K46 bears the N6-(pyridoxal phosphate)lysine mark. Residue R145 coordinates substrate. Y280 functions as the Proton acceptor; specific for L-alanine in the catalytic mechanism. Residue M328 participates in substrate binding.

This sequence belongs to the alanine racemase family. Pyridoxal 5'-phosphate is required as a cofactor.

The enzyme catalyses L-alanine = D-alanine. The protein operates within amino-acid biosynthesis; D-alanine biosynthesis; D-alanine from L-alanine: step 1/1. Catalyzes the interconversion of L-alanine and D-alanine. May also act on other amino acids. This Brucella abortus (strain 2308) protein is Alanine racemase (alr).